A 1866-amino-acid polypeptide reads, in one-letter code: Protein strawberry notch homolog (1866 aa).

Residues 19–28 are compositionally biased toward low complexity; that stretch reads QQSSPTPSTS. 5 disordered regions span residues 19 to 63, 132 to 151, 156 to 253, 561 to 581, and 1112 to 1308; these read QQSS…HSSS, TAPT…IVPK, LFET…GLPI, GMAS…QKAK, and GLSG…ARGS. 2 stretches are compositionally biased toward polar residues: residues 37 to 63 and 134 to 146; these read QSFS…HSSS and PTVN…TPTV. A compositionally biased stretch (low complexity) spans 161–176; sequence TADSPTPSGDTSTTAS. Composition is skewed to polar residues over residues 191–203 and 210–228; these read DRQN…TARS and TPST…LTQR. The segment covering 229–239 has biased composition (low complexity); that stretch reads SHTSSPASSAS. Over residues 566–577 the composition is skewed to polar residues; it reads RLQTTPQPLTKS. A compositionally biased stretch (low complexity) spans 1112–1126; sequence GLSGIGRSSMSSSTG. The span at 1142–1152 shows a compositional bias: acidic residues; it reads DGSDDEVENDM. Residues 1164-1177 show a composition bias toward basic and acidic residues; that stretch reads ESAREEAEGARTLE. The span at 1194 to 1213 shows a compositional bias: acidic residues; the sequence is SSSDDSDEEVVKDEDEDEEA. 2 stretches are compositionally biased toward basic and acidic residues: residues 1262–1281 and 1290–1304; these read RDEE…EERR and RRAE…EELQ.

The protein belongs to the SBNO family. Expressed in the somatic gonad, neurons, hypodermal cells, seam cells, the excretory system, and intestinal cells (at protein level).

The protein localises to the nucleus. Functionally, transcriptional activator that functions upstream of the let-60/Ras and let-23/EGFR signaling pathways to positively regulate lin-3 expression and thereby promote vulval induction. Plays a role in excretory duct development. Plays a role in male tail development. This chain is Protein strawberry notch homolog, found in Caenorhabditis elegans.